We begin with the raw amino-acid sequence, 522 residues long: Amine oxidase [flavin-containing] (522 aa).

Over 1 to 492 (MTAQNTFDVI…FWERNLPSVG (492 aa)) the chain is Cytoplasmic. Cys399 is subject to S-8alpha-FAD cysteine. Residues 493–513 (GFINFLAASVLSVATAAGMLA) traverse the membrane as a helical; Anchor for type IV membrane protein segment. Topologically, residues 514-522 (YQKGLLTRS) are mitochondrial intermembrane.

It belongs to the flavin monoamine oxidase family. It depends on FAD as a cofactor.

It localises to the mitochondrion outer membrane. It catalyses the reaction a secondary aliphatic amine + O2 + H2O = a primary amine + an aldehyde + H2O2. Catalyzes the oxidative deamination of biogenic and xenobiotic amines and has important functions in the metabolism of neuroactive and vasoactive amines in the central nervous system and peripheral tissues. Oxidizes both 5-hydroxytryptamine (5-HT) and beta-phenylethylamine (PEA). This chain is Amine oxidase [flavin-containing] (mao), found in Oncorhynchus mykiss (Rainbow trout).